The following is a 367-amino-acid chain: MDAEQINQIGATLADLSARTADLRRYLDYDAKAERLRTVNASLEDPNVWNDPKKAQELGREKKSLDDVVVTLDRLTSGLSDNTELYEMSKEDGDMDGLQSIADDAAALETDIKQLEFRRMFNNPADPLNAFVDIQAGAGGTEACDWASMLLRQYLKYAERKGFKTQIEDETPGDTAGIKGATIKVEGDYAFGLLRTETGVHRLVRKSPFDSSGGRHTSFASIFVYPEIDDSIEIEINPADVRTDTFRASGAGGQHINKTDSAVRLTHIPTGIVVQCQDGRSQHSNRDVAWKRLRSRLYDHEMRKRQEEQQKLEDSKTDVGWGHQIRSYVLDNSRIKDLRTNVEVSATQKVLDGDLDVFIEASLKQGV.

At Gln-254 the chain carries N5-methylglutamine.

It belongs to the prokaryotic/mitochondrial release factor family. Methylated by PrmC. Methylation increases the termination efficiency of RF2.

The protein resides in the cytoplasm. Its function is as follows. Peptide chain release factor 2 directs the termination of translation in response to the peptide chain termination codons UGA and UAA. The sequence is that of Peptide chain release factor 2 from Variovorax paradoxus (strain S110).